Here is a 560-residue protein sequence, read N- to C-terminus: Tudor and KH domain-containing protein (560 aa).

KH domains are found at residues 52-115 and 124-190; these read DIEI…KAAI and PVFE…KHLI. Glycyl lysine isopeptide (Lys-Gly) (interchain with G-Cter in ubiquitin) cross-links involve residues Lys-65, Lys-76, Lys-110, Lys-112, Lys-152, Lys-175, Lys-181, Lys-187, and Lys-193. The tract at residues 211 to 230 is disordered; that stretch reads RVPRKQPISVRREEVTEPGG. Glycyl lysine isopeptide (Lys-Gly) (interchain with G-Cter in ubiquitin) cross-links involve residues Lys-256 and Lys-267. The segment at 268-291 is disordered; it reads EGSWEKPNDDSFQNSGAQSSPETS. Residues 277-290 show a composition bias toward polar residues; it reads DSFQNSGAQSSPET. Ser-278 is subject to Phosphoserine. Residues 353–412 enclose the Tudor domain; that stretch reads TVHVGDIVAAPLSTNGSWYRARVLGTLENGNLDLYFVDFGDNGDCALKDLRALRSDFLSL. Residues Lys-479, Lys-510, and Lys-529 each participate in a glycyl lysine isopeptide (Lys-Gly) (interchain with G-Cter in ubiquitin) cross-link.

It belongs to the Tdrkh family. Interacts with (symmetrically methylated) PIWIL1, PIWIL2 and PIWIL4. Ubiquitinated by PRKN during mitophagy, leading to its degradation and enhancement of mitophagy. Deubiquitinated by USP30. As to expression, highly expressed in testis, present at lower level in brain. Weakly or not expressed in other tissues (at protein level).

The protein resides in the cytoplasm. It localises to the mitochondrion. In terms of biological role, participates in the primary piRNA biogenesis pathway and is required during spermatogenesis to repress transposable elements and prevent their mobilization, which is essential for the germline integrity. The piRNA metabolic process mediates the repression of transposable elements during meiosis by forming complexes composed of piRNAs and Piwi proteins and govern the methylation and subsequent repression of transposons. Required for the final steps of primary piRNA biogenesis by participating in the processing of 31-37 nt intermediates into mature piRNAs. May act in pi-bodies and piP-bodies by transferring piRNA precursors or intermediates to or between these granules. The sequence is that of Tudor and KH domain-containing protein (Tdrkh) from Mus musculus (Mouse).